We begin with the raw amino-acid sequence, 346 residues long: Senescence-specific cysteine protease SAG12 (346 aa).

An N-terminal signal peptide occupies residues 1 to 25; it reads MALKHMQIFLFVAIFSSFCFSITLS. Asn-124 carries an N-linked (GlcNAc...) asparagine glycan. Disulfide bonds link Cys-151–Cys-192, Cys-185–Cys-225, and Cys-283–Cys-335. Cys-154 is a catalytic residue. His-289 is a catalytic residue. Residue Asn-301 is glycosylated (N-linked (GlcNAc...) asparagine). Residue Asn-310 is part of the active site.

The protein belongs to the peptidase C1 family. In terms of tissue distribution, found in senescent leaves, especially in senescence-associated vacuoles- (SAVs) containing cells (e.g. mesophyll and guard cells), and in senescencing ovules of unfertilised pistils.

The protein localises to the vacuole. Functionally, cysteine protease that may have a developmental senescence specific cell death function during apoptosis, heavy metal detoxification, and hypersensitive response. This Arabidopsis thaliana (Mouse-ear cress) protein is Senescence-specific cysteine protease SAG12.